Here is a 101-residue protein sequence, read N- to C-terminus: Interleukin-8 (101 aa).

The signal sequence occupies residues 1–22 (MTSKLAVALLAAFLLSAALCEG). Arg27 bears the Citrulline mark. Cystine bridges form between Cys34-Cys61 and Cys36-Cys77.

It belongs to the intercrine alpha (chemokine CxC) family. As to quaternary structure, homodimer. Interacts with TNFAIP6 (via Link domain); this interaction interferes with chemokine binding to glycosaminoglycans. In terms of processing, citrullination at Arg-27 prevents proteolysis, and dampens tissue inflammation, it also enhances leukocytosis, possibly through impaired chemokine clearance from the blood circulation.

It is found in the secreted. Chemotactic factor that mediates inflammatory response by attracting neutrophils, basophils, and T-cells to clear pathogens and protect the host from infection. Also plays an important role in neutrophil activation. Released in response to an inflammatory stimulus, exerts its effect by binding to the G-protein-coupled receptors CXCR1 and CXCR2, primarily found in neutrophils, monocytes and endothelial cells. G-protein heterotrimer (alpha, beta, gamma subunits) constitutively binds to CXCR1/CXCR2 receptor and activation by IL8 leads to beta and gamma subunits release from Galpha (GNAI2 in neutrophils) and activation of several downstream signaling pathways including PI3K and MAPK pathways. The protein is Interleukin-8 (CXCL8) of Cercocebus atys (Sooty mangabey).